The sequence spans 94 residues: Neutrophil defensin 1 (94 aa).

An N-terminal signal peptide occupies residues 1–19; sequence MRTLAILAAILLVALQAQA. A propeptide spanning residues 20-38 is cleaved from the precursor; sequence EPLQARADEVAAAPEQIAA. 3 disulfide bridges follow: Cys66/Cys94, Cys68/Cys83, and Cys73/Cys93. Arg78 is modified (ADP-ribosylarginine; by ART1). Residue Tyr85 is modified to Phosphotyrosine. Arg88 carries the ADP-ribosylarginine; by ART1 modification.

It belongs to the alpha-defensin family. Tetramer. Dimer. Interacts with RETN. In terms of assembly, (Microbial infection) Interacts with HIV-1 surface protein gp120. As to quaternary structure, (Microbial infection) Interacts with herpes virus 1 (HHV1) envelope glycoprotein B; this interaction inhibits viral infection. In terms of processing, ADP-ribosylation drastically reduces cytotoxic and antibacterial activities, and enhances IL8 production. Post-translationally, phosphorylation at Tyr-85 has been found in some cancer cell lines, and interferes with ADP-ribosylation.

It is found in the secreted. Effector molecule of the innate immune system that acts via antibiotic-like properties against a broad array of infectious agents including bacteria, fungi, and viruses or by promoting the activation and maturation of some APCs. Interacts with the essential precursor of cell wall synthesis lipid II to inhibit bacterial cell wall synthesis. Inhibits adenovirus infection via inhibition of viral disassembly at the vertex region, thereby restricting the release of internal capsid protein pVI, which is required for endosomal membrane penetration during cell entry. In addition, interaction with adenovirus capsid leads to the redirection of viral particles to TLR4 thereby promoting a NLRP3-mediated inflammasome response and interleukin 1-beta (IL-1beta) release. Induces the production of proinflammatory cytokines including type I interferon (IFN) in plasmacytoid dendritic cells (pDCs) by triggering the degradation of NFKBIA and nuclear translocation of IRF1, both of which are required for activation of pDCs. This chain is Neutrophil defensin 1 (DEFA1), found in Homo sapiens (Human).